The primary structure comprises 118 residues: Small ribosomal subunit protein uS13 (118 aa).

Residues 91–118 (HRRSLPVRGQRTKTNARTRKGPRKPIKA) form a disordered region.

The protein belongs to the universal ribosomal protein uS13 family. As to quaternary structure, part of the 30S ribosomal subunit. Forms a loose heterodimer with protein S19. Forms two bridges to the 50S subunit in the 70S ribosome.

In terms of biological role, located at the top of the head of the 30S subunit, it contacts several helices of the 16S rRNA. In the 70S ribosome it contacts the 23S rRNA (bridge B1a) and protein L5 of the 50S subunit (bridge B1b), connecting the 2 subunits; these bridges are implicated in subunit movement. Contacts the tRNAs in the A and P-sites. The polypeptide is Small ribosomal subunit protein uS13 (Francisella tularensis subsp. tularensis (strain FSC 198)).